The sequence spans 455 residues: UDP-N-acetylmuramoylalanine--D-glutamate ligase (455 aa).

117–123 (GSAGKTT) is a binding site for ATP.

It belongs to the MurCDEF family.

Its subcellular location is the cytoplasm. The catalysed reaction is UDP-N-acetyl-alpha-D-muramoyl-L-alanine + D-glutamate + ATP = UDP-N-acetyl-alpha-D-muramoyl-L-alanyl-D-glutamate + ADP + phosphate + H(+). It participates in cell wall biogenesis; peptidoglycan biosynthesis. Cell wall formation. Catalyzes the addition of glutamate to the nucleotide precursor UDP-N-acetylmuramoyl-L-alanine (UMA). The chain is UDP-N-acetylmuramoylalanine--D-glutamate ligase from Symbiobacterium thermophilum (strain DSM 24528 / JCM 14929 / IAM 14863 / T).